The following is a 300-amino-acid chain: Porphobilinogen deaminase (300 aa).

Position 242 is an S-(dipyrrolylmethanemethyl)cysteine (Cys-242).

This sequence belongs to the HMBS family. As to quaternary structure, monomer. Dipyrromethane is required as a cofactor.

It carries out the reaction 4 porphobilinogen + H2O = hydroxymethylbilane + 4 NH4(+). Its pathway is porphyrin-containing compound metabolism; protoporphyrin-IX biosynthesis; coproporphyrinogen-III from 5-aminolevulinate: step 2/4. Tetrapolymerization of the monopyrrole PBG into the hydroxymethylbilane pre-uroporphyrinogen in several discrete steps. The polypeptide is Porphobilinogen deaminase (Blochmanniella pennsylvanica (strain BPEN)).